The chain runs to 400 residues: MYPYPNEIGRYGDFGGKFVPETLMQPLDEIQTAFKQIKDDPAFREEYYKLLKDYSGRPTALTYADRVTEYLGGAKIYLKREDLNHTGSHKINNALGQALLAKKMGKTKIIAETGAGQHGVAAATVAAKFGFSCTVFMGEEDVARQSLNVFRMKLLGAEVVPVTSGNGTLKDATNEAIRYWVQHCEDHFYMIGSVVGPHPYPQVVREFQKMIGEEAKDQLKRIEGTMPDKVVACVGGGSNAMGMFQAFLNEDVELIGAEAAGKGIDTPLHAATISKGTVGVIHGSLTYLIQDEFGQIIEPYSISAGLDYPGIGPEHAYLHKSGRVTYDSITDEEAVDALKLLSEKEGILPAIESAHALAKAFKLAKGMDRGQLILVCLSGRGDKDVNTLMNVLEEEVKAHV.

Position 90 is an N6-(pyridoxal phosphate)lysine (Lys90).

This sequence belongs to the TrpB family. In terms of assembly, tetramer of two alpha and two beta chains. The cofactor is pyridoxal 5'-phosphate.

It carries out the reaction (1S,2R)-1-C-(indol-3-yl)glycerol 3-phosphate + L-serine = D-glyceraldehyde 3-phosphate + L-tryptophan + H2O. Its pathway is amino-acid biosynthesis; L-tryptophan biosynthesis; L-tryptophan from chorismate: step 5/5. Its function is as follows. The beta subunit is responsible for the synthesis of L-tryptophan from indole and L-serine. In Bacillus subtilis (strain 168), this protein is Tryptophan synthase beta chain (trpB).